Reading from the N-terminus, the 519-residue chain is Sorting nexin-2 (519 aa).

The interval 1 to 104 (MAAEREPPPL…EPSPAVTPVT (104 aa)) is disordered. Composition is skewed to low complexity over residues 27–50 (LFTSTVSTLESSPSSPEPASLPAE) and 93–104 (SSEPSPAVTPVT). A Phosphoserine modification is found at Ser-97. Thr-101 and Thr-104 each carry phosphothreonine. Phosphoserine occurs at positions 117 and 119. Residues 140–269 (FDIEIGVSDP…QFLESSELPR (130 aa)) enclose the PX domain. Arg-183, Ser-185, Lys-211, and Arg-235 together coordinate a 1,2-diacyl-sn-glycero-3-phospho-(1D-myo-inositol-3-phosphate). Ser-185 is subject to Phosphoserine. Positions 260–519 (QFLESSELPR…AFLPEAKAIA (260 aa)) are interaction with RhoG. Ser-277 bears the Phosphoserine mark. A membrane-binding amphipathic helix region spans residues 278–295 (GAGILRMVNKAADAVNKM). The 221-residue stretch at 299 to 519 (MNESDAWFEE…AFLPEAKAIA (221 aa)) folds into the BAR domain. Lys-469 carries the N6-acetyllysine modification.

It belongs to the sorting nexin family. Predominantly forms heterodimers with BAR domain-containing sorting nexins SNX5, SNX6 and SNX32; can self-associate to form homodimers. The heterodimers are proposed to self-assemble into helical arrays on the membrane to stabilize and expand local membrane curvature underlying endosomal tubule formation. Thought to be a component of the originally described retromer complex (also called SNX-BAR retromer) which is a pentamer containing the heterotrimeric retromer cargo-selective complex (CSC), also described as vacuolar protein sorting subcomplex (VPS), and a heterodimeric membrane-deforming subcomplex formed between SNX1 or SNX2 and SNX5 or SNX6 (also called SNX-BAR subcomplex); the respective CSC and SNX-BAR subcomplexes associate with low affinity. Interacts with SNX5, SNX6, SNX32, VPS26A, VPS29, VPS35, FNBP1, KALRN, RHOG (GDP-bound form).

The protein resides in the early endosome membrane. The protein localises to the cell projection. It is found in the lamellipodium. In terms of biological role, involved in several stages of intracellular trafficking. Interacts with membranes containing phosphatidylinositol 3-phosphate (PtdIns(3P)) or phosphatidylinositol 3,5-bisphosphate (PtdIns(3,5)P2). Acts in part as component of the retromer membrane-deforming SNX-BAR subcomplex. The SNX-BAR retromer mediates retrograde transport of cargo proteins from endosomes to the trans-Golgi network (TGN) and is involved in endosome-to-plasma membrane transport for cargo protein recycling. The SNX-BAR subcomplex functions to deform the donor membrane into a tubular profile called endosome-to-TGN transport carrier (ETC). Can sense membrane curvature and has in vitro vesicle-to-membrane remodeling activity. Required for retrograde endosome-to-TGN transport of TGN38. Promotes KALRN- and RHOG-dependent but retromer-independent membrane remodeling such as lamellipodium formation; the function is dependent on GEF activity of KALRN. This chain is Sorting nexin-2 (SNX2), found in Homo sapiens (Human).